A 958-amino-acid polypeptide reads, in one-letter code: N-terminal acetyltransferase B complex subunit NAA25 homolog (958 aa).

TPR repeat units follow at residues 7–42 (AVLE…HPNT), 78–111 (ELTL…DPSE), and 320–353 (FFAY…MLEY).

It belongs to the MDM20/NAA25 family. As to quaternary structure, component of the N-terminal acetyltransferase B (NatB) complex. Interacts with acer-1. As to expression, expressed in germline and somatic cells.

It localises to the cytoplasm. The protein resides in the nucleus. The protein localises to the chromosome. Functionally, non-catalytic subunit of the NatB complex which catalyzes acetylation of the N-terminal methionine residues of proteins beginning with Met-Asp or Met-Glu. Required for chromosome organization and arrangement; specifically for assembly of the central region components of the synaptonemal complex onto chromosomes during meiosis and for DNA double stranded break formation and repair. Acts downstream of xnd-1 to regulate levels of histone acetylation in germ and somatic cell nuclei by controlling acetyl-CoA production through antagonizing the acetyl-CoA hydrolase activity of acer-1. The sequence is that of N-terminal acetyltransferase B complex subunit NAA25 homolog from Caenorhabditis elegans.